A 157-amino-acid chain; its full sequence is Endoribonuclease YbeY (157 aa).

His122, His126, and His132 together coordinate Zn(2+).

It belongs to the endoribonuclease YbeY family. Zn(2+) serves as cofactor.

The protein localises to the cytoplasm. Single strand-specific metallo-endoribonuclease involved in late-stage 70S ribosome quality control and in maturation of the 3' terminus of the 16S rRNA. This is Endoribonuclease YbeY from Lysinibacillus sphaericus (strain C3-41).